The sequence spans 380 residues: Chaperone protein DnaJ (380 aa).

Residues 5–70 (DYYEILGVAK…QKRAAYDQYG (66 aa)) enclose the J domain. The CR-type zinc-finger motif lies at 135-213 (GVSKEIRIPT…CHGHGRVEKS (79 aa)). Cys-148, Cys-151, Cys-165, Cys-168, Cys-187, Cys-190, Cys-201, and Cys-204 together coordinate Zn(2+). CXXCXGXG motif repeat units follow at residues 148–155 (CGVCHGSG), 165–172 (CSTCHGAG), 187–194 (CPTCHGRG), and 201–208 (CNACHGHG).

The protein belongs to the DnaJ family. In terms of assembly, homodimer. Zn(2+) is required as a cofactor.

The protein resides in the cytoplasm. Its function is as follows. Participates actively in the response to hyperosmotic and heat shock by preventing the aggregation of stress-denatured proteins and by disaggregating proteins, also in an autonomous, DnaK-independent fashion. Unfolded proteins bind initially to DnaJ; upon interaction with the DnaJ-bound protein, DnaK hydrolyzes its bound ATP, resulting in the formation of a stable complex. GrpE releases ADP from DnaK; ATP binding to DnaK triggers the release of the substrate protein, thus completing the reaction cycle. Several rounds of ATP-dependent interactions between DnaJ, DnaK and GrpE are required for fully efficient folding. Also involved, together with DnaK and GrpE, in the DNA replication of plasmids through activation of initiation proteins. This chain is Chaperone protein DnaJ, found in Erwinia tasmaniensis (strain DSM 17950 / CFBP 7177 / CIP 109463 / NCPPB 4357 / Et1/99).